A 576-amino-acid chain; its full sequence is Insulin-like growth factor 2 mRNA-binding protein 1 (576 aa).

RRM domains are found at residues 2 to 75 (NKLY…HSVP) and 81 to 156 (RKIQ…YIPD). The disordered stretch occupies residues 158–189 (QSVQGPENGRRGGFGARGAPRQGSPVTAGAPV). KH domains are found at residues 195-260 (DIPL…CKMI) and 276-343 (EVPL…EQEI). A Phosphotyrosine; by SRC modification is found at Tyr-396. 2 consecutive KH domains span residues 404-469 (QETV…QGRI) and 486-552 (KLET…QRKI).

This sequence belongs to the RRM IMP/VICKZ family. In terms of assembly, can form homooligomers and heterooligomers with IGF2BP1 and IGF2BP3 in an RNA-dependent manner. Associates with the cytoskeleton, predominantly with actin filament bundles and occasionally with microtubules. In a heterologous system, interacts with ELAVL1, DHX9 and HNRNPU. Post-translationally, phosphorylated by SRC at Tyr-396. This residue is involved in ACTB mRNA binding, its phosphorylation impairs association with ACTB mRNA and hence abolishes translational repression. Phosphorylation occurs in close proximity to filopodia and in the growth cones of differentiated neuroglioblastoma cells. As to expression, expressed in neurons and embryonic fibroblasts (at protein level).

It is found in the nucleus. The protein resides in the cytoplasm. It localises to the perinuclear region. The protein localises to the P-body. Its subcellular location is the stress granule. It is found in the cell projection. The protein resides in the growth cone. It localises to the filopodium. The protein localises to the lamellipodium. RNA-binding factor that recruits target transcripts to cytoplasmic protein-RNA complexes (mRNPs). This transcript 'caging' into mRNPs allows mRNA transport and transient storage. It also modulates the rate and location at which target transcripts encounter the translational apparatus and shields them from endonuclease attacks or microRNA-mediated degradation. Preferentially binds to N6-methyladenosine (m6A)-containing mRNAs and increases their stability. Plays a direct role in the transport and translation of transcripts required for axonal regeneration in adult sensory neurons. Regulates localized beta-actin/ACTB mRNA translation in polarized cells, a crucial process for cell migration and neurite outgrowth. Co-transcriptionally associates with the ACTB mRNA in the nucleus. This binding involves by a conserved 54-nucleotide element in the ACTB mRNA 3'-UTR, known as the 'zipcode'. The ribonucleoparticle (RNP) thus formed is exported to the cytoplasm, binds to a motor protein and is transported along the cytoskeleton to the cell periphery. During transport, IGF2BP1 prevents beta-actin mRNA from being translated into protein. When the RNP complex reaches its destination near the plasma membrane, IGF2BP1 is phosphorylated by SRC. This releases the mRNA, allowing ribosomal 40S and 60S subunits to assemble and initiate ACTB protein synthesis. The monomeric ACTB protein then assembles into the subcortical actin cytoskeleton, which pushes the leading edge onwards. Binds MYC mRNA. Binding to MYC mRNA is enhanced by m6A-modification of the CRD. Promotes the directed movement of cells by fine-tuning intracellular signaling networks. Binds to MAPK4 3'-UTR and inhibits its translation. Interacts with PTEN transcript open reading frame (ORF) and prevents mRNA decay. This combined action on MAPK4 (down-regulation) and PTEN (up-regulation) antagonizes HSPB1 phosphorylation, consequently it prevents G-actin sequestration by phosphorylated HSPB1, allowing F-actin polymerization. Hence enhances the velocity of cell migration and stimulates directed cell migration by PTEN-modulated polarization. This is Insulin-like growth factor 2 mRNA-binding protein 1 (IGF2BP1) from Gallus gallus (Chicken).